Reading from the N-terminus, the 322-residue chain is Acetylglutamate kinase (322 aa).

Substrate is bound by residues 85-86 (GG), Arg107, and Asn211.

Belongs to the acetylglutamate kinase family. ArgB subfamily.

The protein resides in the cytoplasm. It carries out the reaction N-acetyl-L-glutamate + ATP = N-acetyl-L-glutamyl 5-phosphate + ADP. The protein operates within amino-acid biosynthesis; L-arginine biosynthesis; N(2)-acetyl-L-ornithine from L-glutamate: step 2/4. In terms of biological role, catalyzes the ATP-dependent phosphorylation of N-acetyl-L-glutamate. The chain is Acetylglutamate kinase from Methanosarcina barkeri (strain Fusaro / DSM 804).